An 89-amino-acid polypeptide reads, in one-letter code: HssA/B-like protein 21 (89 aa).

It belongs to the hssA/B family.

The sequence is that of HssA/B-like protein 21 (hssl21) from Dictyostelium discoideum (Social amoeba).